The chain runs to 228 residues: L-ribulose-5-phosphate 4-epimerase UlaF (228 aa).

Substrate is bound by residues 26 to 27, 43 to 44, and 72 to 73; these read GN, SG, and SS. Zn(2+)-binding residues include D74, H93, and H95. Catalysis depends on D118, which acts as the Proton donor/acceptor. H167 contacts Zn(2+). Catalysis depends on Y225, which acts as the Proton donor/acceptor.

This sequence belongs to the aldolase class II family. AraD/FucA subfamily. Requires Zn(2+) as cofactor.

It carries out the reaction L-ribulose 5-phosphate = D-xylulose 5-phosphate. It functions in the pathway cofactor degradation; L-ascorbate degradation; D-xylulose 5-phosphate from L-ascorbate: step 4/4. Catalyzes the isomerization of L-ribulose 5-phosphate to D-xylulose 5-phosphate. Is involved in the anaerobic L-ascorbate utilization. In Shigella sonnei (strain Ss046), this protein is L-ribulose-5-phosphate 4-epimerase UlaF.